The chain runs to 201 residues: Dephospho-CoA kinase (201 aa).

The 198-residue stretch at 4 to 201 folds into the DPCK domain; sequence AFFVTASIAC…VIQEISKGNM (198 aa). ATP is bound at residue 12–17; that stretch reads ACGKST.

Belongs to the CoaE family.

It localises to the cytoplasm. The catalysed reaction is 3'-dephospho-CoA + ATP = ADP + CoA + H(+). It participates in cofactor biosynthesis; coenzyme A biosynthesis; CoA from (R)-pantothenate: step 5/5. Functionally, catalyzes the phosphorylation of the 3'-hydroxyl group of dephosphocoenzyme A to form coenzyme A. The polypeptide is Dephospho-CoA kinase (Campylobacter jejuni subsp. jejuni serotype O:2 (strain ATCC 700819 / NCTC 11168)).